A 408-amino-acid chain; its full sequence is uncharacterized protein (408 aa).

The next 12 membrane-spanning stretches (helical) occupy residues 9 to 29 (WFVL…RNSF), 49 to 69 (VSVS…GFFI), 77 to 97 (IMAL…YSPN), 100 to 120 (VFSA…VGVT), 135 to 155 (LALA…SPIW), 167 to 187 (TYTI…VFGM), 216 to 236 (LIHI…IIDA), 252 to 272 (GMMA…GWLS), 283 to 303 (SILF…ILGI), 308 to 328 (LWYF…IPLT), 340 to 360 (LIGS…ALSV), and 373 to 393 (YLLI…IELV).

The protein belongs to the major facilitator superfamily.

The protein resides in the cell membrane. This is an uncharacterized protein from Bacillus subtilis (strain 168).